The chain runs to 92 residues: C-C motif chemokine 3 (92 aa).

The first 23 residues, 1-23, serve as a signal peptide directing secretion; it reads MKVSTAALAVLLCTMALWNEVFS. 2 cysteine pairs are disulfide-bonded: C34–C57 and C35–C73.

Belongs to the intercrine beta (chemokine CC) family. Self-associates. Also heterodimer of MIP-1-alpha(4-69) and MIP-1-beta(3-69). Interacts with CCR1.

The protein resides in the secreted. Functionally, monokine with inflammatory and chemokinetic properties. Binds to CCR1, CCR4 and CCR5. One of the major HIV-suppressive factors produced by CD8+ T-cells. Recombinant MIP-1-alpha induces a dose-dependent inhibition of different strains of HIV-1, HIV-2, and simian immunodeficiency virus (SIV). The chain is C-C motif chemokine 3 (Ccl3) from Rattus norvegicus (Rat).